A 406-amino-acid polypeptide reads, in one-letter code: Magnesium transporter NIPA4 (406 aa).

Over 1-57 (MELRVANANGSCENGSIVSLYCSSQEVLCQIVRGISPEEPYNATLITWQERVRKKYG) the chain is Extracellular. N-linked (GlcNAc...) asparagine glycans are attached at residues Asn-9, Asn-14, and Asn-42. A helical transmembrane segment spans residues 58 to 78 (FYIGVGLAFLSCFLIGTSVIL). Over 79–126 (KKKGLIRLVATGATRAVNGGYGYLKDPMWWAGMATMSAGEVANFGAYA) the chain is Cytoplasmic. Residues 127–147 (FAPATVVTPLGALSVLISAIF) traverse the membrane as a helical segment. Topologically, residues 148 to 155 (SSYCLGES) are extracellular. The helical transmembrane segment at 156–176 (LNLLGKLGCVICMAGSTVMVI) threads the bilayer. Over 177–197 (HAPKEEKVTTVAEMASKMKDT) the chain is Cytoplasmic. A helical transmembrane segment spans residues 198–218 (GFIVFAVLLVVSCLILIFIVA). Residues 219–225 (PRYGQRN) are Extracellular-facing. A helical transmembrane segment spans residues 226–246 (ILIYIIICSVIGSFSVTAVKG). The Cytoplasmic segment spans residues 247–263 (LGVTIRNFFQGLPVVRH). Residues 264 to 284 (PLPYILSLILGLSIIIQVNFL) form a helical membrane-spanning segment. The Extracellular portion of the chain corresponds to 285 to 295 (NRALDIFNTSL). An N-linked (GlcNAc...) asparagine glycan is attached at Asn-292. The chain crosses the membrane as a helical span at residues 296-316 (VFPIYYVFFTTVVVASSIVLF). At 317–326 (KEWYTMSAVD) the chain is on the cytoplasmic side. Residues 327–347 (IVGTLSGFVTIILGVFMLHAF) form a helical membrane-spanning segment. Residues 348–406 (KDLDINQISLPHTHKNPTPAPAPEPTVIKLEDKNVLVDNIELASTPSPQQKPKVFMTDS) lie on the Extracellular side of the membrane.

Belongs to the NIPA family.

It is found in the cell membrane. It carries out the reaction Mg(2+)(in) = Mg(2+)(out). Its function is as follows. Acts as a Mg(2+) transporter. Can also transport other divalent cations such as Ba(2+), Sr(2+) and Fe(2+) but to a much less extent than Mg(2+). May be a receptor for ligands (trioxilins A3 and B3) from the hepoxilin pathway. The protein is Magnesium transporter NIPA4 (Nipal4) of Mus musculus (Mouse).